A 131-amino-acid polypeptide reads, in one-letter code: ATP synthase epsilon chain (131 aa).

It belongs to the ATPase epsilon chain family. In terms of assembly, F-type ATPases have 2 components, CF(1) - the catalytic core - and CF(0) - the membrane proton channel. CF(1) has five subunits: alpha(3), beta(3), gamma(1), delta(1), epsilon(1). CF(0) has three main subunits: a, b and c.

The protein localises to the cell inner membrane. Functionally, produces ATP from ADP in the presence of a proton gradient across the membrane. This Wolinella succinogenes (strain ATCC 29543 / DSM 1740 / CCUG 13145 / JCM 31913 / LMG 7466 / NCTC 11488 / FDC 602W) (Vibrio succinogenes) protein is ATP synthase epsilon chain.